We begin with the raw amino-acid sequence, 348 residues long: MTNPQGPPNDPSPWARPGDQGPLARPPASSEASTGRLRPGEPAGHIQEPVSPPTQPEQQPQTEHLAASHAHTRRSGRQAAHQAWDPTGLLAAQEEEPAAVKTKRRARRDPLTVFLVLIIVFSLVLAGLIGGELYARHVANSKVAQAVACVVKDQATASFGVAPLLLWQVATRHFTNISVETAGNQIRDAKGMQIKLTIQNVRLKNTPNSRGTIGALDATITWSSEGIKESVQNAIPILGAFVTSSVVTHPADGTVELKGLLNNITAKPIVAGKGLELQIINFNTLGFSLPKETVQSTLNEFTSSLTKNYPLGIHADSVQVTSTGVVSRFSTRDAAIPTGIQNPCFSHI.

Positions 1 to 11 are enriched in pro residues; the sequence is MTNPQGPPNDP. Positions 1 to 83 are disordered; that stretch reads MTNPQGPPND…RSGRQAAHQA (83 aa). The next 2 helical transmembrane spans lie at 111-131 and 235-255; these read LTVF…LIGG and IPIL…DGTV.

It localises to the cell membrane. This is an uncharacterized protein from Mycobacterium tuberculosis (strain CDC 1551 / Oshkosh).